We begin with the raw amino-acid sequence, 841 residues long: Protein translocase subunit SecA (841 aa).

Residues Gln85, 103-107, and Asp492 each bind ATP; that span reads GEGKT. The disordered stretch occupies residues 786–812; it reads REEVVQGQTTAHQPQDGDEAKQAKKAP. Residues Cys825, Cys827, Cys836, and Cys837 each coordinate Zn(2+).

The protein belongs to the SecA family. In terms of assembly, monomer and homodimer. Part of the essential Sec protein translocation apparatus which comprises SecA, SecYEG and auxiliary proteins SecDF. Other proteins may also be involved. Requires Zn(2+) as cofactor.

It localises to the cell membrane. It is found in the cytoplasm. It catalyses the reaction ATP + H2O + cellular proteinSide 1 = ADP + phosphate + cellular proteinSide 2.. Its function is as follows. Part of the Sec protein translocase complex. Interacts with the SecYEG preprotein conducting channel. Has a central role in coupling the hydrolysis of ATP to the transfer of proteins into and across the cell membrane, serving as an ATP-driven molecular motor driving the stepwise translocation of polypeptide chains across the membrane. This is Protein translocase subunit SecA from Bacillus velezensis (strain DSM 23117 / BGSC 10A6 / LMG 26770 / FZB42) (Bacillus amyloliquefaciens subsp. plantarum).